A 265-amino-acid polypeptide reads, in one-letter code: UPF0354 protein ABC2771 (265 aa).

The protein belongs to the UPF0354 family.

In Shouchella clausii (strain KSM-K16) (Alkalihalobacillus clausii), this protein is UPF0354 protein ABC2771.